The chain runs to 331 residues: MSDSRLVDPFGRRITYLRLSVTDRCDFRCTYCMSEDMQFLPRDQVLSLEELYAVADAFIGLGVRRIRITGGEPLVRKGITGLLARLGQRAELEDLAITTNGSQLRERAAELKAAGVRRLNVSLDSLQRERFAAFTRSDRLEQVLDGIQAAREAGFERIKLNCVVQKGRNDDEILDLVEYALANQLDISFIEEMPLGSITSHRRELTLCTSDEVRAIIERRWPLTPSLARSGGPSRYYQIGDEPSRIGFISPHSNNFCGDCNRVRVTAEGKLVLCLGHEGALDLRELLRSHPGDRERLSAALVAALNLKPERHHFDAQEQVQVLRFMSMTGG.

The Radical SAM core domain maps to 9–234 (PFGRRITYLR…PSLARSGGPS (226 aa)). Residue R18 participates in GTP binding. [4Fe-4S] cluster contacts are provided by C25 and C29. Residue Y31 participates in S-adenosyl-L-methionine binding. [4Fe-4S] cluster is bound at residue C32. R67 is a binding site for GTP. G71 is a binding site for S-adenosyl-L-methionine. T98 lines the GTP pocket. S122 serves as a coordination point for S-adenosyl-L-methionine. Residue K159 coordinates GTP. M193 contributes to the S-adenosyl-L-methionine binding site. 2 residues coordinate [4Fe-4S] cluster: C257 and C260. 262–264 (RVR) provides a ligand contact to GTP. C274 serves as a coordination point for [4Fe-4S] cluster.

It belongs to the radical SAM superfamily. MoaA family. Monomer and homodimer. [4Fe-4S] cluster serves as cofactor.

The catalysed reaction is GTP + AH2 + S-adenosyl-L-methionine = (8S)-3',8-cyclo-7,8-dihydroguanosine 5'-triphosphate + 5'-deoxyadenosine + L-methionine + A + H(+). Its pathway is cofactor biosynthesis; molybdopterin biosynthesis. In terms of biological role, catalyzes the cyclization of GTP to (8S)-3',8-cyclo-7,8-dihydroguanosine 5'-triphosphate. This is GTP 3',8-cyclase 2 (moaA2) from Pseudomonas aeruginosa (strain ATCC 15692 / DSM 22644 / CIP 104116 / JCM 14847 / LMG 12228 / 1C / PRS 101 / PAO1).